We begin with the raw amino-acid sequence, 30 residues long: Brevinin-2Rj (30 aa).

Cys-24 and Cys-30 are oxidised to a cystine.

In terms of tissue distribution, expressed by the skin glands.

The protein resides in the secreted. Antimicrobial peptide. In Pelophylax ridibundus (Marsh frog), this protein is Brevinin-2Rj.